Here is a 168-residue protein sequence, read N- to C-terminus: Putative B3 domain-containing protein Os10g0158600 (168 aa).

Positions valine 4–glutamine 97 form a DNA-binding region, TF-B3. The disordered stretch occupies residues lysine 105 to arginine 151. The segment covering threonine 106–serine 138 has biased composition (polar residues).

It is found in the nucleus. The polypeptide is Putative B3 domain-containing protein Os10g0158600 (Oryza sativa subsp. japonica (Rice)).